The chain runs to 387 residues: Erythronate-4-phosphate dehydrogenase (387 aa).

Substrate contacts are provided by Ser-45 and Thr-67. Residue Asp-147 coordinates NAD(+). Arg-208 is a catalytic residue. Asp-232 is a binding site for NAD(+). Glu-237 is a catalytic residue. The active-site Proton donor is the His-254. Gly-257 lines the NAD(+) pocket. Substrate is bound at residue Tyr-258.

Belongs to the D-isomer specific 2-hydroxyacid dehydrogenase family. PdxB subfamily. In terms of assembly, homodimer.

The protein resides in the cytoplasm. The enzyme catalyses 4-phospho-D-erythronate + NAD(+) = (R)-3-hydroxy-2-oxo-4-phosphooxybutanoate + NADH + H(+). It functions in the pathway cofactor biosynthesis; pyridoxine 5'-phosphate biosynthesis; pyridoxine 5'-phosphate from D-erythrose 4-phosphate: step 2/5. Its function is as follows. Catalyzes the oxidation of erythronate-4-phosphate to 3-hydroxy-2-oxo-4-phosphonooxybutanoate. This Shewanella woodyi (strain ATCC 51908 / MS32) protein is Erythronate-4-phosphate dehydrogenase.